The following is a 318-amino-acid chain: D-alanine--D-alanine ligase B (318 aa).

Positions 116–311 constitute an ATP-grasp domain; it reads KQVWQSLGIP…FQQLVLAILA (196 aa). An ATP-binding site is contributed by 142 to 197; sequence STELGFPLIVKPAHEGSSIGMAKVNSTQELVAAWQDAAKYDSQVLVEQWIHGPEFT. The Mg(2+) site is built by Asp-265, Glu-278, and Asn-280.

The protein belongs to the D-alanine--D-alanine ligase family. Mg(2+) serves as cofactor. The cofactor is Mn(2+).

The protein localises to the cytoplasm. It carries out the reaction 2 D-alanine + ATP = D-alanyl-D-alanine + ADP + phosphate + H(+). It participates in cell wall biogenesis; peptidoglycan biosynthesis. Cell wall formation. This is D-alanine--D-alanine ligase B from Pseudomonas putida (strain ATCC 47054 / DSM 6125 / CFBP 8728 / NCIMB 11950 / KT2440).